A 593-amino-acid polypeptide reads, in one-letter code: Genetic interactor of prohibitins 3, mitochondrial (593 aa).

A mitochondrion-targeting transit peptide spans 1 to 61 (MLGRIRPFVR…NPSKPGFYRP (61 aa)). Residues 142–349 (VESIDKIMST…IVDVPGFSAN (208 aa)) form the CP-type G domain.

The protein belongs to the TRAFAC class YlqF/YawG GTPase family. GEP3 subfamily.

Its subcellular location is the mitochondrion. Functionally, may be involved in the mitochondrial lipid metabolism. In Debaryomyces hansenii (strain ATCC 36239 / CBS 767 / BCRC 21394 / JCM 1990 / NBRC 0083 / IGC 2968) (Yeast), this protein is Genetic interactor of prohibitins 3, mitochondrial (GEP3).